The chain runs to 103 residues: L-rhamnose-binding lectin ELEL-1 (103 aa).

The 90-residue stretch at valine 13–serine 102 folds into the SUEL-type lectin domain. Intrachain disulfides connect cysteine 14/cysteine 45, cysteine 23/cysteine 101, cysteine 56/cysteine 88, and cysteine 69/cysteine 75.

Homodimer; disulfide-linked. In terms of processing, not glycosylated.

Rhamnose-binding lectin. Also binds alpha-D-melibiose, alpha-D-lactose, beta-D-lactose, methyl-alpha-D-galactopyranoside, methyl-beta-D--galactopyranoside and D-galactose but not D-arabinose, L-fucose, D-glucose, D-mannose, D-maltose, D-sucrose, N-acetyl-D-galactosamine, N-acetyl-D-glucosamine, N-acetyl-D-mannosamine-D-xylose or by glycoproteins orosomucoid, thyroglobulin, ovomucoid and porcine stomach mucin. Shows cation-independent hemagglutinating activity against rabbit and human erythrocytes. Agglutinates cells of Gram-positive bacterial species S.aureus but not those of Gram-negative E.coli. The chain is L-rhamnose-binding lectin ELEL-1 from Echinometra lucunter (Rock-boring urchin).